The sequence spans 101 residues: NAD(P)H-quinone oxidoreductase subunit 4L, chloroplastic (101 aa).

The next 3 membrane-spanning stretches (helical) occupy residues 2 to 22 (ILEHVLVLSAYLFLIGLYGLI), 32 to 52 (MCLELILNAVNMNFVTFSDFF), and 61 to 81 (IFCIFVIAIAAAEAAIGLAIV).

The protein belongs to the complex I subunit 4L family. NDH is composed of at least 16 different subunits, 5 of which are encoded in the nucleus.

It localises to the plastid. The protein localises to the chloroplast thylakoid membrane. The enzyme catalyses a plastoquinone + NADH + (n+1) H(+)(in) = a plastoquinol + NAD(+) + n H(+)(out). It catalyses the reaction a plastoquinone + NADPH + (n+1) H(+)(in) = a plastoquinol + NADP(+) + n H(+)(out). NDH shuttles electrons from NAD(P)H:plastoquinone, via FMN and iron-sulfur (Fe-S) centers, to quinones in the photosynthetic chain and possibly in a chloroplast respiratory chain. The immediate electron acceptor for the enzyme in this species is believed to be plastoquinone. Couples the redox reaction to proton translocation, and thus conserves the redox energy in a proton gradient. The polypeptide is NAD(P)H-quinone oxidoreductase subunit 4L, chloroplastic (Arabidopsis thaliana (Mouse-ear cress)).